Here is a 154-residue protein sequence, read N- to C-terminus: Myoglobin (154 aa).

A Globin domain is found at 2–148 (GLSEAEWQLV…FRKDIAAKYK (147 aa)). Residue Ser4 is modified to Phosphoserine. Residue His65 coordinates nitrite. His65 is an O2 binding site. Thr68 carries the phosphothreonine modification. His94 is a heme b binding site.

It belongs to the globin family. In terms of assembly, monomeric.

The protein localises to the cytoplasm. It localises to the sarcoplasm. The catalysed reaction is Fe(III)-heme b-[protein] + nitric oxide + H2O = Fe(II)-heme b-[protein] + nitrite + 2 H(+). The enzyme catalyses H2O2 + AH2 = A + 2 H2O. Monomeric heme protein which primary function is to store oxygen and facilitate its diffusion within muscle tissues. Reversibly binds oxygen through a pentacoordinated heme iron and enables its timely and efficient release as needed during periods of heightened demand. Depending on the oxidative conditions of tissues and cells, and in addition to its ability to bind oxygen, it also has a nitrite reductase activity whereby it regulates the production of bioactive nitric oxide. Under stress conditions, like hypoxia and anoxia, it also protects cells against reactive oxygen species thanks to its pseudoperoxidase activity. The chain is Myoglobin (MB) from Indopacetus pacificus (Longman's beaked whale).